Here is a 112-residue protein sequence, read N- to C-terminus: Protein preY, mitochondrial (112 aa).

A mitochondrion-targeting transit peptide spans 1 to 34 (MLTTTCRRLSQALQRPHALSAVAQRCLRAPGARS). Residues 49–95 (HPALLQFLVCPLSKKPLRYDASTNELINDELGIAYPIIDGVPNMIPQ) form the TRM112 domain.

It belongs to the PREY family. Interacts (via TRM112 domain) with NDUFAF5; the interaction is direct and stabilizes NDUFAF5 protein. Interacts with COQ5; the interaction is direct, stabilizes COQ5 protein and associates PYURF with COQ enzyme complex.

Its subcellular location is the mitochondrion. Functionally, in mitochondria, S-adenosylmethionine-dependent methyltransferase chaperone that supports both coenzyme Q biosynthesis, by stabilizing its components, such as COQ5, and NADH:ubiquinone oxidoreductase complex (complex I, MT-ND1) assembly, by stabilizing complex I assembly factors, such as NDUFAF5. The protein is Protein preY, mitochondrial (Pyurf) of Rattus norvegicus (Rat).